Consider the following 452-residue polypeptide: tRNA-2-methylthio-N(6)-dimethylallyladenosine synthase (452 aa).

One can recognise an MTTase N-terminal domain in the interval 16–134 (KRFFISTWGC…LPEYIERVKT (119 aa)). The [4Fe-4S] cluster site is built by cysteine 25, cysteine 61, cysteine 95, cysteine 171, cysteine 175, and cysteine 178. Residues 157 to 387 (RKSDIKAFVT…VEAVNEIMAR (231 aa)) form the Radical SAM core domain. The region spanning 390–452 (KEFEGKTVEV…NSFSLTGEII (63 aa)) is the TRAM domain.

Belongs to the methylthiotransferase family. MiaB subfamily. As to quaternary structure, monomer. The cofactor is [4Fe-4S] cluster.

Its subcellular location is the cytoplasm. It carries out the reaction N(6)-dimethylallyladenosine(37) in tRNA + (sulfur carrier)-SH + AH2 + 2 S-adenosyl-L-methionine = 2-methylsulfanyl-N(6)-dimethylallyladenosine(37) in tRNA + (sulfur carrier)-H + 5'-deoxyadenosine + L-methionine + A + S-adenosyl-L-homocysteine + 2 H(+). Functionally, catalyzes the methylthiolation of N6-(dimethylallyl)adenosine (i(6)A), leading to the formation of 2-methylthio-N6-(dimethylallyl)adenosine (ms(2)i(6)A) at position 37 in tRNAs that read codons beginning with uridine. The sequence is that of tRNA-2-methylthio-N(6)-dimethylallyladenosine synthase from Clostridium novyi (strain NT).